A 78-amino-acid chain; its full sequence is Large ribosomal subunit protein bL28 (78 aa).

This sequence belongs to the bacterial ribosomal protein bL28 family.

The chain is Large ribosomal subunit protein bL28 from Synechococcus sp. (strain JA-2-3B'a(2-13)) (Cyanobacteria bacterium Yellowstone B-Prime).